A 484-amino-acid polypeptide reads, in one-letter code: UDP-N-acetylmuramate--L-alanine ligase (484 aa).

Residue 122–128 (GTHGKTT) participates in ATP binding.

It belongs to the MurCDEF family.

Its subcellular location is the cytoplasm. It carries out the reaction UDP-N-acetyl-alpha-D-muramate + L-alanine + ATP = UDP-N-acetyl-alpha-D-muramoyl-L-alanine + ADP + phosphate + H(+). The protein operates within cell wall biogenesis; peptidoglycan biosynthesis. Its function is as follows. Cell wall formation. This is UDP-N-acetylmuramate--L-alanine ligase from Mycobacterium sp. (strain JLS).